Consider the following 218-residue polypeptide: Putative inactive cathepsin L-like protein CTSL3P (218 aa).

Disordered stretches follow at residues 144 to 173 and 195 to 218; these read GDWK…EVAQ and GDED…EAQV. The span at 201–212 shows a compositional bias: basic and acidic residues; it reads EDKWPHDMRNHL.

This sequence belongs to the peptidase C1 family.

This chain is Putative inactive cathepsin L-like protein CTSL3P (CTSL3P), found in Homo sapiens (Human).